The chain runs to 310 residues: Probable cell division protein WhiA (310 aa).

A DNA-binding region (H-T-H motif) is located at residues 277–310; the sequence is SLKELAEQVPDGPISKSGVNHRLKKLHEIAENLR.

Belongs to the WhiA family.

Functionally, involved in cell division and chromosome segregation. In Lactobacillus delbrueckii subsp. bulgaricus (strain ATCC 11842 / DSM 20081 / BCRC 10696 / JCM 1002 / NBRC 13953 / NCIMB 11778 / NCTC 12712 / WDCM 00102 / Lb 14), this protein is Probable cell division protein WhiA.